The following is a 564-amino-acid chain: Potassium-transporting ATPase potassium-binding subunit (564 aa).

The next 10 helical transmembrane spans lie at 4–24 (YDYWLILAFFAVVLLPAPFLG), 67–87 (TLALLAFNLAGFLLLFAILLF), 135–155 (VGLTVQNFVSAATGLAVLVAL), 179–199 (LYGLLPLCLLLALYLVWQGVP), 258–278 (FEVASIILIPVALVFTFGHYV), 286–306 (AIIGCMLALFIIGGATSLWAE), 382–402 (AGLYGMLLNVLIAVFLAGLMI), 420–440 (LLVVTLLVMPVGVLVLGAIAA), 487–507 (LMLGLGMLIGRFGYILPVLAL), and 528–548 (GPLFVTLLTVTILLLGGLTFL).

It belongs to the KdpA family. In terms of assembly, the system is composed of three essential subunits: KdpA, KdpB and KdpC.

The protein localises to the cell inner membrane. In terms of biological role, part of the high-affinity ATP-driven potassium transport (or Kdp) system, which catalyzes the hydrolysis of ATP coupled with the electrogenic transport of potassium into the cytoplasm. This subunit binds the periplasmic potassium ions and delivers the ions to the membrane domain of KdpB through an intramembrane tunnel. This is Potassium-transporting ATPase potassium-binding subunit from Pseudomonas fluorescens (strain Pf0-1).